A 90-amino-acid polypeptide reads, in one-letter code: Translation initiation factor IF-1 (90 aa).

One can recognise an S1-like domain in the interval 15–90 (KKQKRKKEEV…TLGRIVFRHK (76 aa)).

Belongs to the IF-1 family. Component of the 30S ribosomal translation pre-initiation complex which assembles on the 30S ribosome in the order IF-2 and IF-3, IF-1 and N-formylmethionyl-tRNA(fMet); mRNA recruitment can occur at any time during PIC assembly.

The protein localises to the cytoplasm. Functionally, one of the essential components for the initiation of protein synthesis. Stabilizes the binding of IF-2 and IF-3 on the 30S subunit to which N-formylmethionyl-tRNA(fMet) subsequently binds. Helps modulate mRNA selection, yielding the 30S pre-initiation complex (PIC). Upon addition of the 50S ribosomal subunit IF-1, IF-2 and IF-3 are released leaving the mature 70S translation initiation complex. This Mycoplasma sp protein is Translation initiation factor IF-1.